Here is a 3644-residue protein sequence, read N- to C-terminus: Msx2-interacting protein (3644 aa).

Residues 1-574 (MVRETRHLWV…DAQAAVKETK (574 aa)) mediate DNA binding. Residues 6–81 (RHLWVGNLPE…RDLRTDYNEP (76 aa)) form the RRM 1 domain. Ser-99 bears the Phosphoserine mark. Disordered stretches follow at residues 103-124 (EVSGFRGSAGGPAYGPPPSLHA), 170-209 (YRDPRERTLQHGLYYTSRSRSPNRFDAHDPRYEPRAREQF), and 225-331 (TREV…EKDE). An Omega-N-methylarginine modification is found at Arg-108. Phosphoserine occurs at positions 188 and 190. Basic and acidic residues-rich tracts occupy residues 192–207 (NRFDAHDPRYEPRARE) and 225–237 (TREVRGRRPERSY). The segment covering 245–310 (PHSSQSRNQS…TASDDSPARS (66 aa)) has biased composition (low complexity). Ser-310 bears the Phosphoserine mark. 3 consecutive RRM domains span residues 336-416 (FGIK…VGPE), 439-514 (RTLF…FGKS), and 518-590 (NCVW…FANR). A coiled-coil region spans residues 559–575 (LYSEIEDAQAAVKETKG). Disordered stretches follow at residues 625-673 (SKHE…SRRD) and 716-1413 (IREY…ASSF). 2 stretches are compositionally biased toward basic and acidic residues: residues 639-656 (KCREERRGSYEYSQERTY) and 716-745 (IREYSYRQRERERERERFESDRDHERRPIE). Residue Ser-647 is modified to Phosphoserine. 4 positions are modified to phosphoserine: Ser-747, Ser-749, Ser-758, and Ser-762. Over residues 765–783 (HSERLPSDSERRLYRRSSE) the composition is skewed to basic and acidic residues. Positions 784 to 794 (RSGSCSSVSPP) are enriched in low complexity. Residue Ser-792 is modified to Phosphoserine. Positions 795–842 (RYDKLEKARLERYTKNEKADKERTFDPERVERERRIVRKEKGEKDKAE) are enriched in basic and acidic residues. Residues 822-850 (ERVERERRIVRKEKGEKDKAERQKRKGKA) are a coiled coil. Phosphoserine is present on residues Ser-852, Ser-855, and Ser-869. 4 stretches are compositionally biased toward basic and acidic residues: residues 863–894 (ENDREQSPEKPRGSTKLSRDRADKEGPAKNRL), 904–930 (RVKEKEGKVIEHPPPEKLKARLGRDTT), 947–975 (AKSDPARGKALREKVLPSHAEVGEKEGRT), and 1009–1071 (LKIE…KLER). Ser-1077 and Ser-1183 each carry phosphoserine. A compositionally biased stretch (basic and acidic residues) spans 1138 to 1227 (GPEKEEVRKN…ERRSLVHEVG (90 aa)). Positions 1185 to 1206 (RKQMEQSRRKQRMEMEIAKAEK) form a coiled coil. 9 positions are modified to phosphoserine: Ser-1209, Ser-1237, Ser-1267, Ser-1276, Ser-1283, Ser-1293, Ser-1298, Ser-1302, and Ser-1348. Basic and acidic residues predominate over residues 1246–1272 (DHVDFDICTKRERNYRSSRQISEDSER). Residues 1283-1292 (SFHDDDDPRG) are compositionally biased toward basic and acidic residues. The segment covering 1351 to 1365 (EPSRWDPPMKQDPSR) has biased composition (basic and acidic residues). 2 positions are modified to phosphoserine: Ser-1395 and Ser-1397. Residues Thr-1454 and Thr-1456 each carry the phosphothreonine modification. Disordered stretches follow at residues 1494–1538 (DKEK…QERQ) and 1557–2447 (RLQH…ARFK). Residues 1509-1544 (YMKKKKIRTDSEGKLDDKKDERREEEQERQELFASR) adopt a coiled-coil conformation. 2 stretches are compositionally biased toward basic and acidic residues: residues 1516–1538 (RTDSEGKLDDKKDERREEEQERQ) and 1557–1567 (RLQHLERKSEE). Residues 1582-1591 (EGANSTSDSV) show a composition bias toward polar residues. Residues 1601-1646 (RFMELTRMQQKEKEKDQKPKEAEKQEEPETHPKTPEPAAETKEPEP) are compositionally biased toward basic and acidic residues. Positions 1607-1627 (RMQQKEKEKDQKPKEAEKQEE) form a coiled coil. Residue Thr-1634 is modified to Phosphothreonine. Residues 1701–1710 (VSEPVSVPVE) are compositionally biased toward low complexity. The segment covering 1756-1765 (PGTTVSQVES) has biased composition (polar residues). Positions 1782–1796 (QRSEEAEEGKVEKPD) are enriched in basic and acidic residues. Over residues 1797-1810 (TTPSTEPDATQNAG) the composition is skewed to polar residues. At Thr-1844 the chain carries Phosphothreonine. Composition is skewed to basic and acidic residues over residues 1857–1871 (PVTRKSERIDREKLK) and 1879–1894 (EAQKLLELKMEAEKIT). A phosphoserine mark is found at Ser-1915 and Ser-1936. Basic and acidic residues predominate over residues 1930–1943 (TDHESRSPAKEPVE). At Thr-1965 the chain carries Phosphothreonine. Over residues 1967–1976 (RRGRPPKTRR) the composition is skewed to basic residues. 4 stretches are compositionally biased toward basic and acidic residues: residues 1977–1991 (RAEEDGEHERKEPAE), 2039–2066 (GNPKSRGEREAASEPKRDRRDPSTDKSG), 2074–2084 (VLERKPPEKTY), and 2097–2106 (GMDRAAHQRS). Residues Ser-2128 and Ser-2134 each carry the phosphoserine modification. A compositionally biased stretch (polar residues) spans 2129-2147 (PQESESPQKGSGSSPQLAN). The interval 2138-2462 (GSGSSPQLAN…ESDPVTPPSD (325 aa)) is interaction with MSX2. Thr-2171 bears the Phosphothreonine mark. Composition is skewed to low complexity over residues 2191 to 2212 (EPSAAAASKGTATATATAASEE) and 2231 to 2242 (AAAIGSIISDAS). Residues 2216 to 2704 (EHGHKPAHQA…NVLTGPVNVL (489 aa)) enclose the RID domain. Over residues 2261–2274 (HPREGMEPGLHEAE) the composition is skewed to basic and acidic residues. The segment covering 2281-2290 (GTATESSAPQ) has biased composition (polar residues). The span at 2318 to 2329 (KGSKAEVTPPRK) shows a compositional bias: basic and acidic residues. A compositionally biased stretch (basic residues) spans 2330–2345 (DKGRQKTTRRRKRNAN). A compositionally biased stretch (low complexity) spans 2359 to 2379 (AEQTQSESPAAEEATAATPEA). Ser-2366 is subject to Phosphoserine. A Phosphothreonine modification is found at Thr-2419. Ser-2450 and Ser-2454 each carry phosphoserine. Disordered regions lie at residues 2453 to 2472 (ESDPVTPPSDSGIPPPTIPL), 2481 to 2528 (PVIP…MDTS), 2745 to 2781 (AAKGKQRASSNENSRFHPGSMSVIDDRPADTGSGAGL), and 2829 to 2849 (SQVKADSITPTQSAPKGPQTP). Phosphothreonine is present on Thr-2458. The residue at position 2491 (Ser-2491) is a Phosphoserine. The interval 2706–2845 (TPVSATVGTV…ITPTQSAPKG (140 aa)) is interaction with RBPSUH. 2 positions are modified to phosphothreonine: Thr-2913 and Thr-2925. Residues 2974 to 3023 (NHVPSGPSTPADRTIAHLATPKPDTHSPRPTGPTPGLFPRPCHPSSTTST) form a disordered region. Pro residues predominate over residues 3003-3015 (PTGPTPGLFPRPC). Asymmetric dimethylarginine occurs at positions 3088 and 3096. The interval 3310–3473 (RTKTSAQVPP…QESSPHGTPQ (164 aa)) is disordered. Residues 3323 to 3340 (PLQSTQSAQPAPSTQATQ) are compositionally biased toward low complexity. Over residues 3366–3379 (QVSQEAKGTQTGGV) the composition is skewed to polar residues. Ser-3413 carries the post-translational modification Phosphoserine. An SPOC domain is found at 3478-3644 (MVQLLKKYPI…PHLMIVIASV (167 aa)).

It belongs to the RRM Spen family. In terms of assembly, interacts with NCOR2, HDAC1, HDAC2, RBBP4, MBD3 and MTA1L1. Interacts with the nuclear receptors RAR and PPARD. Interacts with RAR in absence of ligand. Binds to the steroid receptor RNA coactivator SRA. Interacts with MSX2. Interacts with RBPSUH; this interaction may prevent the interaction between RBPSUH and NOTCH1. Binds to HIPK3. As to expression, highly expressed in testis. Expressed at lower level in brain, lung, spleen, liver and kidney. Weakly expressed in cardiac and skeletal muscles and ovary. In spleen, it is expressed in follicular B-cells, while it is weakly expressed in marginal zone B-cells.

It localises to the nucleus. May serve as a nuclear matrix platform that organizes and integrates transcriptional responses. In osteoblasts, supports transcription activation: synergizes with RUNX2 to enhance FGFR2-mediated activation of the osteocalcin FGF-responsive element (OCFRE). Has also been shown to be an essential corepressor protein, which probably regulates different key pathways, such as the Notch pathway. Negative regulator of the Notch pathway via its interaction with RBPSUH, which prevents the association between NOTCH1 and RBPSUH, and therefore suppresses the transactivation activity of Notch signaling. Blocks the differentiation of precursor B-cells into marginal zone B-cells. Probably represses transcription via the recruitment of large complexes containing histone deacetylase proteins. May bind both to DNA and RNA. The polypeptide is Msx2-interacting protein (Spen) (Mus musculus (Mouse)).